The sequence spans 1325 residues: Nephrocystin-3 (1325 aa).

The disordered stretch occupies residues 1–20 (MGTASSLVSPTGGEVIEDTY). G2 carries N-myristoyl glycine lipidation. Residues 107 to 203 (SMGRREAKLD…QRLQAQGIQV (97 aa)) are a coiled coil. TPR repeat units lie at residues 467 to 500 (TPEE…AHEL), 881 to 914 (CLLN…KGAM), 916 to 937 (TEYF…MLCL), 938 to 971 (ADLY…RETA), 980 to 1013 (AQSL…SENA), 1022 to 1055 (AREL…RQQA), 1088 to 1121 (ARTL…RERV), 1130 to 1163 (AQSL…RRRA), 1172 to 1205 (AYTV…RQKS), 1214 to 1247 (ATAL…YEDS), and 1256 to 1289 (GETL…KEAE). Positions 1293-1325 (LGGKAPSRQSSSGDTFLFKTTHSPNVFLPQGQS) are disordered. The span at 1299–1325 (SRQSSSGDTFLFKTTHSPNVFLPQGQS) shows a compositional bias: polar residues.

In terms of assembly, interacts with NPHP1 and INVS/NPHP2. Interacts (when myristoylated) with UNC119 and UNC119B; interaction is required for localization to cilium. Interacts with CEP164. Component of a complex containing at least ANKS6, INVS, NEK8 and NPHP3. ANKS6 may organize complex assembly by linking INVS and NPHP3 to NEK8 and INVS may target the complex to the proximal ciliary axoneme.

It is found in the cell projection. It localises to the cilium. In terms of biological role, required for normal ciliary development and function. Inhibits disheveled-1-induced canonical Wnt-signaling activity and may also play a role in the control of non-canonical Wnt signaling that regulates planar cell polarity. Probably acts as a molecular switch between different Wnt signaling pathways. Required for proper convergent extension cell movements. The chain is Nephrocystin-3 (Nphp3) from Mus musculus (Mouse).